We begin with the raw amino-acid sequence, 404 residues long: Glucose-1-phosphate adenylyltransferase 2 (404 aa).

Alpha-D-glucose 1-phosphate is bound by residues tyrosine 97, glycine 162, 177–178, and serine 195; that span reads EK.

Belongs to the bacterial/plant glucose-1-phosphate adenylyltransferase family. In terms of assembly, homotetramer.

The catalysed reaction is alpha-D-glucose 1-phosphate + ATP + H(+) = ADP-alpha-D-glucose + diphosphate. The protein operates within glycan biosynthesis; glycogen biosynthesis. In terms of biological role, involved in the biosynthesis of ADP-glucose, a building block required for the elongation reactions to produce glycogen. Catalyzes the reaction between ATP and alpha-D-glucose 1-phosphate (G1P) to produce pyrophosphate and ADP-Glc. The chain is Glucose-1-phosphate adenylyltransferase 2 from Vibrio vulnificus (strain CMCP6).